The sequence spans 876 residues: ATP-dependent helicase Lhr-Core (876 aa).

ATP-binding residues include Q37, K60, T61, D175, E176, R374, and H377. One can recognise a Helicase ATP-binding domain in the interval 41-232 (IPLIKKGKNV…FLVGGNGDYE (192 aa)). A DEAH box motif is present at residues 175 to 178 (DEIH). The 173-residue stretch at 249–421 (PVKDLVHATE…NIHVPENPLD (173 aa)) folds into the Helicase C-terminal domain. The segment at 422–506 (VLTQLIVAAS…IFFLNSGTIP (85 aa)) is WH domain. The domain 4 stretch occupies residues 507 to 876 (DEAMIPVKME…DLEYTEAGIK (370 aa)).

The protein belongs to the Lhr helicase family. Lhr-Core subfamily. As to quaternary structure, monomer.

It carries out the reaction Couples ATP hydrolysis with the unwinding of duplex DNA by translocating in the 3'-5' direction.. The enzyme catalyses ATP + H2O = ADP + phosphate + H(+). In terms of biological role, probably part of a 4-gene DNA damage response locus in which the upstream ups system, in combination with this downstream locus, functions in homologous recombination to rescue Sulfolobales from DNA-damaging threats. DNA helicase that translocates in a 3'-5' direction on single-stranded (ss)DNA. Binds Holliday junction (HJ) DNA, Y-shaped DNA, DNA with a 3'-overhang and single-stranded (ss)DNA with high affinity; binds double-stranded (ds)DNA with less affinity. Has helicase activity on DNA with a 3'-overhang, Y-shaped DNA and HJ DNA. Does not unwind blunt-ended dsDNA or DNA with a 5'-overhang. The chain is ATP-dependent helicase Lhr-Core from Sulfolobus acidocaldarius (strain ATCC 33909 / DSM 639 / JCM 8929 / NBRC 15157 / NCIMB 11770).